A 159-amino-acid chain; its full sequence is Dihydrofolate reductase (159 aa).

Positions 2-157 (TLSILVAHDL…IPHTFLHLIR (156 aa)) constitute a DHFR domain. 6–8 (LVA) contacts substrate. NADP(+) is bound by residues 7–8 (VA) and 15–20 (IGFENQ). Substrate is bound at residue aspartate 28. An NADP(+)-binding site is contributed by 44–47 (GRKT). Arginine 58 lines the substrate pocket. NADP(+)-binding positions include 63-66 (LTSD) and 93-98 (FGGQIL). Threonine 112 contributes to the substrate binding site.

This sequence belongs to the dihydrofolate reductase family.

The catalysed reaction is (6S)-5,6,7,8-tetrahydrofolate + NADP(+) = 7,8-dihydrofolate + NADPH + H(+). The protein operates within cofactor biosynthesis; tetrahydrofolate biosynthesis; 5,6,7,8-tetrahydrofolate from 7,8-dihydrofolate: step 1/1. In terms of biological role, key enzyme in folate metabolism. Catalyzes an essential reaction for de novo glycine and purine synthesis, and for DNA precursor synthesis. The sequence is that of Dihydrofolate reductase (folA) from Staphylococcus aureus (strain MW2).